A 283-amino-acid polypeptide reads, in one-letter code: Acetylglutamate kinase (283 aa).

Substrate-binding positions include 63-64, Arg-85, and Asn-178; that span reads GG.

This sequence belongs to the acetylglutamate kinase family. ArgB subfamily.

It is found in the cytoplasm. It carries out the reaction N-acetyl-L-glutamate + ATP = N-acetyl-L-glutamyl 5-phosphate + ADP. It participates in amino-acid biosynthesis; L-arginine biosynthesis; N(2)-acetyl-L-ornithine from L-glutamate: step 2/4. Catalyzes the ATP-dependent phosphorylation of N-acetyl-L-glutamate. This is Acetylglutamate kinase from Prochlorococcus marinus (strain MIT 9312).